The sequence spans 83 residues: Exodeoxyribonuclease 7 small subunit (83 aa).

The protein belongs to the XseB family. As to quaternary structure, heterooligomer composed of large and small subunits.

Its subcellular location is the cytoplasm. It carries out the reaction Exonucleolytic cleavage in either 5'- to 3'- or 3'- to 5'-direction to yield nucleoside 5'-phosphates.. Its function is as follows. Bidirectionally degrades single-stranded DNA into large acid-insoluble oligonucleotides, which are then degraded further into small acid-soluble oligonucleotides. The polypeptide is Exodeoxyribonuclease 7 small subunit (Mesorhizobium japonicum (strain LMG 29417 / CECT 9101 / MAFF 303099) (Mesorhizobium loti (strain MAFF 303099))).